The chain runs to 166 residues: Bacterial microcompartment shell protein EutK (166 aa).

In terms of domain architecture, BMC spans 4-88 (ALGLLEVDGM…PDDDTQWLVT (85 aa)). A EutK-Ctail domain is found at 109–165 (ESADELLALLTSVRQGMTAGEVAAHFGWPLEKARNALEQLFSAGTLRKRSSRYRLKP).

The protein belongs to the bacterial microcompartments protein family. Monomeric in solution.

The protein resides in the bacterial microcompartment. It functions in the pathway amine and polyamine degradation; ethanolamine degradation. Its function is as follows. Probably a minor component of the bacterial microcompartment (BMC) shell dedicated to ethanolamine degradation. It might bind nucleic acids. This Escherichia coli (strain K12) protein is Bacterial microcompartment shell protein EutK (eutK).